Here is a 478-residue protein sequence, read N- to C-terminus: Cysteine--tRNA ligase (478 aa).

C29 lines the Zn(2+) pocket. A 'HIGH' region motif is present at residues 31–41 (ATVQSIPHIGH). 3 residues coordinate Zn(2+): C207, H232, and E236. The 'KMSKS' region signature appears at 263–267 (KMSKS). K266 lines the ATP pocket.

Belongs to the class-I aminoacyl-tRNA synthetase family. In terms of assembly, monomer. Zn(2+) is required as a cofactor.

It localises to the cytoplasm. It catalyses the reaction tRNA(Cys) + L-cysteine + ATP = L-cysteinyl-tRNA(Cys) + AMP + diphosphate. The polypeptide is Cysteine--tRNA ligase (Corynebacterium jeikeium (strain K411)).